We begin with the raw amino-acid sequence, 350 residues long: Ferredoxin--NADP reductase (350 aa).

Positions 22, 41, 49, 54, 94, 129, 295, and 336 each coordinate FAD.

The protein belongs to the ferredoxin--NADP reductase type 2 family. Homodimer. FAD is required as a cofactor.

The catalysed reaction is 2 reduced [2Fe-2S]-[ferredoxin] + NADP(+) + H(+) = 2 oxidized [2Fe-2S]-[ferredoxin] + NADPH. In Chlorobium luteolum (strain DSM 273 / BCRC 81028 / 2530) (Pelodictyon luteolum), this protein is Ferredoxin--NADP reductase.